The chain runs to 205 residues: Probable thymidylate kinase (205 aa).

ATP is bound at residue 7–14 (GIDGAGKS).

Belongs to the thymidylate kinase family.

The enzyme catalyses dTMP + ATP = dTDP + ADP. The protein is Probable thymidylate kinase of Thermococcus kodakarensis (strain ATCC BAA-918 / JCM 12380 / KOD1) (Pyrococcus kodakaraensis (strain KOD1)).